Here is a 133-residue protein sequence, read N- to C-terminus: Protein Ac75 (133 aa).

In terms of assembly, interacts with protein Ac76.

Its subcellular location is the virion. It is found in the host cytoplasm. The protein resides in the host nucleus. Plays a role in nuclear egress of nucleocapsids and intranuclear microvesicle formation. This chain is Protein Ac75 (Ac75), found in Lepidoptera (butterflies and moths).